Consider the following 326-residue polypeptide: Alkanal monooxygenase beta chain (326 aa).

This sequence belongs to the bacterial luciferase oxidoreductase family. In terms of assembly, heterodimer of an alpha and a beta chain.

It carries out the reaction a long-chain fatty aldehyde + FMNH2 + O2 = a long-chain fatty acid + hnu + FMN + H2O + 2 H(+). Functionally, light-emitting reaction in luminous bacteria. The specific role of the beta subunit is unknown, but it is absolutely required for bioluminescence activity. The protein is Alkanal monooxygenase beta chain (luxB) of Aliivibrio fischeri (Vibrio fischeri).